A 304-amino-acid chain; its full sequence is Glycine--tRNA ligase alpha subunit (304 aa).

Belongs to the class-II aminoacyl-tRNA synthetase family. In terms of assembly, tetramer of two alpha and two beta subunits.

It is found in the cytoplasm. The enzyme catalyses tRNA(Gly) + glycine + ATP = glycyl-tRNA(Gly) + AMP + diphosphate. In Yersinia enterocolitica serotype O:8 / biotype 1B (strain NCTC 13174 / 8081), this protein is Glycine--tRNA ligase alpha subunit.